The chain runs to 294 residues: uncharacterized protein (294 aa).

It belongs to the glycosyltransferase 2 family.

This is an uncharacterized protein from Haemophilus influenzae (strain ATCC 51907 / DSM 11121 / KW20 / Rd).